The sequence spans 84 residues: uncharacterized protein (84 aa).

3 helical membrane passes run 8–28, 30–50, and 63–83; these read IYFFTIACIIAVIYCVLVNLL, INVIPVVLAFSLILILTISTI, and VLFMLLVLAFFAYAIYKLYIP.

It is found in the cell membrane. This is an uncharacterized protein from Methanocaldococcus jannaschii (strain ATCC 43067 / DSM 2661 / JAL-1 / JCM 10045 / NBRC 100440) (Methanococcus jannaschii).